Here is a 172-residue protein sequence, read N- to C-terminus: Stellate protein CG33247 (172 aa).

The protein belongs to the casein kinase 2 subunit beta family. Interacts in vitro with the casein kinase 2 alpha subunit (CkII-alpha). The relevance of such interaction is however unclear in vivo. Probably not expressed in wild-type flies. In males lacking the Y chromosome, it is testis-specific and constitutes the main component of star-shaped crystals.

Unknown. In males lacking the Y chromosome, its strong overexpression leads to the appearance of proteinaceous star-shaped crystals in the primary spermatocytes causing meiotic drive, possibly by interfering with normal casein kinase 2 activity. In Drosophila melanogaster (Fruit fly), this protein is Stellate protein CG33247 (Ste:CG33247).